The chain runs to 693 residues: FAST kinase domain-containing protein 2, mitochondrial (693 aa).

A phosphoserine mark is found at Ser-110 and Ser-124. Residues 618-675 (VAVLCVSRSAYCLGSSHPRGFLAMKMRHLNAMGFRVILVNNWEMDKLEMEDAVTFLKT) enclose the RAP domain. Residue Ser-692 is modified to Phosphoserine.

Belongs to the FAST kinase family. As to quaternary structure, monomer. Found in a complex with GRSF1, DDX28, DHX30 and FASTKD5. Associates with the 16S mitochondrial rRNA (16S mt-rRNA). Forms a regulatory protein-RNA complex, consisting of RCC1L, NGRN, RPUSD3, RPUSD4, TRUB2, FASTKD2 and 16S mt-rRNA.

Its subcellular location is the mitochondrion matrix. It is found in the mitochondrion nucleoid. Functionally, plays an important role in assembly of the mitochondrial large ribosomal subunit. As a component of a functional protein-RNA module, consisting of RCC1L, NGRN, RPUSD3, RPUSD4, TRUB2, FASTKD2 and 16S mitochondrial ribosomal RNA (16S mt-rRNA), controls 16S mt-rRNA abundance and is required for intra-mitochondrial translation. May play a role in mitochondrial apoptosis. The polypeptide is FAST kinase domain-containing protein 2, mitochondrial (FASTKD2) (Pongo abelii (Sumatran orangutan)).